The chain runs to 735 residues: Protein argonaute (735 aa).

Residues 1–94 are N-terminal domain; that stretch reads MDLLSNLRRS…LVQMGTKQLD (94 aa). The interval 95-180 is linker L1; sequence CRNDAHRCAL…IDIHHRFYTP (86 aa). Residues 181–284 are PAZ domain; it reads WTVHQWLEQY…SPSLTMEMLA (104 aa). The tract at residues 285–369 is linker L2; that stretch reads KVAEDSTVCD…SKTADIRNKG (85 aa). The interval 370 to 498 is mid domain; it reads CAKIGETSFG…LLCKAGWQPI (129 aa). The segment at 499 to 735 is PIWI domain; sequence QLESVDHPEV…NISRDKLIAV (237 aa). Catalysis depends on residues Asp516, Glu550, Asp584, and Asp709. Asp516 is a Mn(2+) binding site. Residues Asp584, Asp709, and Val735 each coordinate Mn(2+).

The protein belongs to the argonaute family. Long pAgo subfamily. In terms of assembly, copurifies with SSB proteins Synpcc7942_0079 and Synpcc7942_0301 as well as other proteins. Mn(2+) serves as cofactor.

Functionally, a DNA-guided ssDNA endonuclease that might play a role in defense against invading mobile genetic elements. Uses short ssDNA sequences as guides (gDNA) to bind complementary target strands, resulting in cleavage of the target DNA (tDNA). The cleavage site is 10 nucleotides (nt) downstream of the target residue base-paired with the 5'-end of the gDNA. Both 5'-P and 5'-OH gDNAs confer activity; a 5'-OH guide cleaves between nt 10-11 and nt 11-12. Guide DNA mismatches in the seed (nt 2-9) can enhance activity, mismatches 1-5 nt after the cleavage site block activity. Has no appreciable activity with guide RNA or on target RNA. In situ binds to 5'-phosphorylated DNA 14-20 nt in length; small DNA maps over the chromosome and plasmid with some preference for the replication origin and the probable termination site. Also has weak guide-independent nuclease activity on DNA called 'chopping'. Overexpression of wild-type or catalytically inactive mutant has no visible effect during growth under continuous high light for up to a month. The protein is Protein argonaute of Synechococcus elongatus (strain ATCC 33912 / PCC 7942 / FACHB-805) (Anacystis nidulans R2).